The chain runs to 331 residues: Phosphate acyltransferase (331 aa).

This sequence belongs to the PlsX family. As to quaternary structure, homodimer. Probably interacts with PlsY.

Its subcellular location is the cytoplasm. The enzyme catalyses a fatty acyl-[ACP] + phosphate = an acyl phosphate + holo-[ACP]. It functions in the pathway lipid metabolism; phospholipid metabolism. In terms of biological role, catalyzes the reversible formation of acyl-phosphate (acyl-PO(4)) from acyl-[acyl-carrier-protein] (acyl-ACP). This enzyme utilizes acyl-ACP as fatty acyl donor, but not acyl-CoA. The chain is Phosphate acyltransferase from Ureaplasma urealyticum serovar 10 (strain ATCC 33699 / Western).